A 616-amino-acid chain; its full sequence is MALLQIAEPGQSSAPHQHKLAAGIDLGTTNSLVASVRSGTASTLVDSQGRSILPSVVNYGADATRVGYPAREQAETDPHNTVISVKRLLGRSLQDINQRYPHLPYRFKASEKGLPIVQTAQGDKNPIQISADILKALAERATATLGGELAGVVITVPAYFDDAQRVATKDAAALAGLHVLRLLNEPTAAAIAYGLDSGQEGVIAVYDLGGGTFDISILRLSRGVFEVLATGGDSALGGDDFDHLIADHLQAQIGLTSLTAEQQRALINAATQAKIDLTEHMTAELNVLGWQGTFTREELENLIAPLLKKTLLSCRRALKDAGVEADEVLEVVMVGGSTRTPFVREQVGEFFGRTPLTSINPDEVVAIGAAIQADILAGNKPDAEMLLLDVIPLSLGIETMGGLVEKIIPRNTTIPVARAQEFTTFKDGQTAMSVHVVQGEREMVDDCRSLARFSLKGIPPMAAGAAHIRVTYQVDADGLLSVTALEKSTGVQAEIQVKPSYGLSDDEVTQMLKDSMAYAKEDMLARALAEQRVEADRVIEGLVSALQADGDELLSEQERQTLLQAIERLIELRNGDNADAIEQGIKDTDKASQDFASRRMDKSIRSALAGHSVDEI.

This sequence belongs to the heat shock protein 70 family.

Functionally, chaperone involved in the maturation of iron-sulfur cluster-containing proteins. Has a low intrinsic ATPase activity which is markedly stimulated by HscB. This chain is Chaperone protein HscA homolog, found in Vibrio cholerae serotype O1 (strain M66-2).